Here is a 455-residue protein sequence, read N- to C-terminus: Mu-like prophage FluMu DNA circularization protein (455 aa).

A DNA-binding region (H-T-H motif) is located at residues 368–387 (VILDNADAEQWTSYAALEQY).

To phage Mu protein N.

The protein is Mu-like prophage FluMu DNA circularization protein of Haemophilus influenzae (strain ATCC 51907 / DSM 11121 / KW20 / Rd).